The following is a 168-amino-acid chain: Peptide deformylase (168 aa).

Positions 92 and 134 each coordinate Fe cation. Glu-135 is a catalytic residue. His-138 is a Fe cation binding site.

It belongs to the polypeptide deformylase family. Fe(2+) is required as a cofactor.

The catalysed reaction is N-terminal N-formyl-L-methionyl-[peptide] + H2O = N-terminal L-methionyl-[peptide] + formate. In terms of biological role, removes the formyl group from the N-terminal Met of newly synthesized proteins. Requires at least a dipeptide for an efficient rate of reaction. N-terminal L-methionine is a prerequisite for activity but the enzyme has broad specificity at other positions. This chain is Peptide deformylase, found in Azotobacter vinelandii (strain DJ / ATCC BAA-1303).